The sequence spans 184 residues: ATP synthase subunit b, chloroplastic (184 aa).

A helical transmembrane segment spans residues 27-49 (LATNPINLSVVLGVLIFFGKGVL).

The protein belongs to the ATPase B chain family. In terms of assembly, F-type ATPases have 2 components, F(1) - the catalytic core - and F(0) - the membrane proton channel. F(1) has five subunits: alpha(3), beta(3), gamma(1), delta(1), epsilon(1). F(0) has four main subunits: a(1), b(1), b'(1) and c(10-14). The alpha and beta chains form an alternating ring which encloses part of the gamma chain. F(1) is attached to F(0) by a central stalk formed by the gamma and epsilon chains, while a peripheral stalk is formed by the delta, b and b' chains.

It is found in the plastid. The protein resides in the chloroplast thylakoid membrane. Its function is as follows. F(1)F(0) ATP synthase produces ATP from ADP in the presence of a proton or sodium gradient. F-type ATPases consist of two structural domains, F(1) containing the extramembraneous catalytic core and F(0) containing the membrane proton channel, linked together by a central stalk and a peripheral stalk. During catalysis, ATP synthesis in the catalytic domain of F(1) is coupled via a rotary mechanism of the central stalk subunits to proton translocation. Component of the F(0) channel, it forms part of the peripheral stalk, linking F(1) to F(0). In Platanus occidentalis (Sycamore), this protein is ATP synthase subunit b, chloroplastic.